The following is a 449-amino-acid chain: MDSSVTTGRSGIGTGQGSPAASGQPISKAGQAIPNLRDRIPKLEPRRRKQEPSNPTPVPETPALPPRPDPSTLVFQTPVRRILLLKDHELFLASPSFNLILSFVFSLSESVADTPISAIKDSDLSEPVKAILRILDETEALCKESPPDDQGGSRFGNKTFRLFLDKVKQRGHQWHAAFLGGKLPDAAVTEASAYLNQSFGNRTRIDYGSGHELNFIMWLLCLYQLSVLEQSDFKAVVLRVFARYLEVMRLIQMTYYLEPAGSHGVWGLDDYQFLPFLFGASQLLHHHFITPRAIHQELTLEEFGHDFLYLGQVAFVNSTKTVKGLRWHSPMLDDISSAKNWEKIEGGMRRMFVSEVLKKLPVMQHFLFGSLIPAAEGMSEQDPNALGSEENEEEGGEVEVYDDSDGKRHVHQPTGWGDCCGIKVPSSLAAAEEMRKRGQVESLRRIPFD.

Disordered stretches follow at residues methionine 1–threonine 72 and methionine 378–tryptophan 416. The segment covering asparagine 54–aspartate 69 has biased composition (pro residues). The span at glutamate 389–aspartate 403 shows a compositional bias: acidic residues.

The protein belongs to the PTPA-type PPIase family.

Its subcellular location is the cytoplasm. It carries out the reaction [protein]-peptidylproline (omega=180) = [protein]-peptidylproline (omega=0). In terms of biological role, PPIases accelerate the folding of proteins. It catalyzes the cis-trans isomerization of proline imidic peptide bonds in oligopeptides. Acts as a regulatory subunit for PP2A-like phosphatases modulating their activity or substrate specificity, probably by inducing a conformational change in the catalytic subunit, a direct target of the PPIase. Can reactivate inactive phosphatase PP2A-phosphatase methylesterase complexes (PP2Ai) in presence of ATP and Mg(2+) by dissociating the inactive form from the complex. In Neurospora crassa (strain ATCC 24698 / 74-OR23-1A / CBS 708.71 / DSM 1257 / FGSC 987), this protein is Serine/threonine-protein phosphatase 2A activator 2 (rrd-2).